Consider the following 714-residue polypeptide: ATP-dependent DNA helicase DinG (714 aa).

Residues 17–294 (ALQDQIPDFI…TSMEQFRPKT (278 aa)) enclose the Helicase ATP-binding domain. 54–61 (APTGVGKT) provides a ligand contact to ATP. [4Fe-4S] cluster-binding residues include Cys120, Cys194, Cys199, and Cys205. Positions 248–251 (DEGH) match the DEAH box motif. Positions 517-698 (HIAEMAAYFR…VFPIEQPAVP (182 aa)) constitute a Helicase C-terminal domain.

Belongs to the helicase family. DinG subfamily. Type 1 sub-subfamily. The cofactor is [4Fe-4S] cluster.

The enzyme catalyses Couples ATP hydrolysis with the unwinding of duplex DNA at the replication fork by translocating in the 5'-3' direction. This creates two antiparallel DNA single strands (ssDNA). The leading ssDNA polymer is the template for DNA polymerase III holoenzyme which synthesizes a continuous strand.. It catalyses the reaction ATP + H2O = ADP + phosphate + H(+). Its function is as follows. DNA-dependent ATPase and 5'-3' DNA helicase. Unwinds D-loops, R-loops, forked DNA and G-quadruplex DNA. This Salmonella choleraesuis (strain SC-B67) protein is ATP-dependent DNA helicase DinG.